A 402-amino-acid polypeptide reads, in one-letter code: Phytoene synthase 2, chloroplastic (402 aa).

A chloroplast-targeting transit peptide spans 1 to 54 (MAAGSSAVWAAQHPACSGGKFHHLSPSHSHCRPRRALQTPPALPARRSGASPPR). Basic residues predominate over residues 20–35 (KFHHLSPSHSHCRPRR). Residues 20–54 (KFHHLSPSHSHCRPRRALQTPPALPARRSGASPPR) form a disordered region. Residues 44–54 (PARRSGASPPR) are compositionally biased toward low complexity.

The protein belongs to the phytoene/squalene synthase family. Expressed in leaves and endosperm.

It is found in the plastid. It localises to the chloroplast. The protein resides in the plastoglobule. The catalysed reaction is 2 (2E,6E,10E)-geranylgeranyl diphosphate = 15-cis-phytoene + 2 diphosphate. In terms of biological role, catalyzes the conversion of geranylgeranyl diphosphate to phytoene. Mediates the first committed step in carotenoid biosynthesis. This is Phytoene synthase 2, chloroplastic from Zea mays (Maize).